The primary structure comprises 256 residues: Leucyl/phenylalanyl-tRNA--protein transferase (256 aa).

The tract at residues 232–256 is disordered; sequence DGCTGASRHGPGADMRRGDMSREST. A compositionally biased stretch (basic and acidic residues) spans 245–256; sequence DMRRGDMSREST.

The protein belongs to the L/F-transferase family.

It localises to the cytoplasm. It carries out the reaction N-terminal L-lysyl-[protein] + L-leucyl-tRNA(Leu) = N-terminal L-leucyl-L-lysyl-[protein] + tRNA(Leu) + H(+). The enzyme catalyses N-terminal L-arginyl-[protein] + L-leucyl-tRNA(Leu) = N-terminal L-leucyl-L-arginyl-[protein] + tRNA(Leu) + H(+). It catalyses the reaction L-phenylalanyl-tRNA(Phe) + an N-terminal L-alpha-aminoacyl-[protein] = an N-terminal L-phenylalanyl-L-alpha-aminoacyl-[protein] + tRNA(Phe). In terms of biological role, functions in the N-end rule pathway of protein degradation where it conjugates Leu, Phe and, less efficiently, Met from aminoacyl-tRNAs to the N-termini of proteins containing an N-terminal arginine or lysine. The protein is Leucyl/phenylalanyl-tRNA--protein transferase of Chromohalobacter salexigens (strain ATCC BAA-138 / DSM 3043 / CIP 106854 / NCIMB 13768 / 1H11).